The primary structure comprises 341 residues: HTH-type transcriptional repressor PurR (341 aa).

The HTH lacI-type domain maps to 2 to 56; sequence ATIKDVAKRANVSTTTVSHVINKTRFVAEETRNAVWAAIKELHYSPSAVARSLKV. The H-T-H motif DNA-binding region spans 4 to 23; sequence IKDVAKRANVSTTTVSHVIN. The DNA-binding element occupies 48–56; that stretch reads SAVARSLKV. Residues Tyr-73, Arg-190, Thr-192, Phe-221, and Asp-275 each contribute to the hypoxanthine site.

Homodimer.

It functions in the pathway purine metabolism; purine nucleotide biosynthesis [regulation]. Functionally, is the main repressor of the genes involved in the de novo synthesis of purine nucleotides, regulating purB, purC, purEK, purF, purHD, purL, purMN and guaBA expression. PurR is allosterically activated to bind its cognate DNA by binding the purine corepressors, hypoxanthine or guanine, thereby effecting transcription repression. In Salmonella typhi, this protein is HTH-type transcriptional repressor PurR.